We begin with the raw amino-acid sequence, 308 residues long: Pantothenate kinase (308 aa).

ATP is bound at residue 91–98 (GSVAVGKS).

This sequence belongs to the prokaryotic pantothenate kinase family.

It localises to the cytoplasm. It carries out the reaction (R)-pantothenate + ATP = (R)-4'-phosphopantothenate + ADP + H(+). It functions in the pathway cofactor biosynthesis; coenzyme A biosynthesis; CoA from (R)-pantothenate: step 1/5. In Lacticaseibacillus paracasei (strain ATCC 334 / BCRC 17002 / CCUG 31169 / CIP 107868 / KCTC 3260 / NRRL B-441) (Lactobacillus paracasei), this protein is Pantothenate kinase.